Consider the following 128-residue polypeptide: MAAAMETDEQQRIRFQLELEFVQCLANPNYLNFLAQRGYFKDKSFVNYLKYLLYWKDPEYAKYLKYPQCLHMLELLQYEHFRKELVNAQCAKFIDEQQILHWQHYSRKRMRMQQALAEQQQQNNTSGK.

The protein belongs to the Mediator complex subunit 31 family. As to quaternary structure, component of the Mediator complex.

Its subcellular location is the nucleus. Component of the Mediator complex, a coactivator involved in the regulated transcription of nearly all RNA polymerase II-dependent genes. Mediator functions as a bridge to convey information from gene-specific regulatory proteins to the basal RNA polymerase II transcription machinery. Mediator is recruited to promoters by direct interactions with regulatory proteins and serves as a scaffold for the assembly of a functional preinitiation complex with RNA polymerase II and the general transcription factors. This is Mediator of RNA polymerase II transcription subunit 31 (med31) from Xenopus tropicalis (Western clawed frog).